Here is a 421-residue protein sequence, read N- to C-terminus: Probable pectate lyase C (421 aa).

The N-terminal stretch at 1-19 (MQPLHTLLALLPLCRSTTA) is a signal peptide. N-linked (GlcNAc...) asparagine glycosylation is found at asparagine 164 and asparagine 201. Residue arginine 204 is part of the active site. An EF-hand domain is found at 257-292 (NENFHGYVENNYYDPDQDGTLNGNELGVSSSNYGGM). Ca(2+) is bound by residues aspartate 270, aspartate 272, aspartate 274, threonine 276, and glutamate 281. The tract at residues 353–376 (DFGGVGDLDGGETPTDTDGDGIPD) is disordered. The span at 367 to 376 (TDTDGDGIPD) shows a compositional bias: acidic residues.

The protein belongs to the polysaccharide lyase 1 family. Requires Ca(2+) as cofactor.

It localises to the secreted. The enzyme catalyses Eliminative cleavage of (1-&gt;4)-alpha-D-galacturonan to give oligosaccharides with 4-deoxy-alpha-D-galact-4-enuronosyl groups at their non-reducing ends.. Its function is as follows. Pectinolytic enzyme consist of four classes of enzymes: pectin lyase, polygalacturonase, pectin methylesterase and rhamnogalacturonase. Among pectinolytic enzymes, pectin lyase is the most important in depolymerization of pectin, since it cleaves internal glycosidic bonds of highly methylated pectins. Favors pectate, the anion, over pectin, the methyl ester. The chain is Probable pectate lyase C (plyC) from Emericella nidulans (strain FGSC A4 / ATCC 38163 / CBS 112.46 / NRRL 194 / M139) (Aspergillus nidulans).